The chain runs to 157 residues: Endoribonuclease YbeY (157 aa).

Zn(2+) contacts are provided by H114, H118, and H124.

It belongs to the endoribonuclease YbeY family. The cofactor is Zn(2+).

The protein resides in the cytoplasm. Single strand-specific metallo-endoribonuclease involved in late-stage 70S ribosome quality control and in maturation of the 3' terminus of the 16S rRNA. This chain is Endoribonuclease YbeY, found in Caulobacter vibrioides (strain ATCC 19089 / CIP 103742 / CB 15) (Caulobacter crescentus).